A 374-amino-acid polypeptide reads, in one-letter code: MKISVSKNDLENALRYLQAFLDKKDASSIASHIHLEVIKEKLFLKASDSDIGLKSYIFTQSSDKEGVGTINGKKFLDIISCLKDSNIILETKDDSLAIKQNKSSFKLPMFDADEFPEFPVIDPKVSIEVNAPFLVDAFKKIAPVIEQTSHKRELAGILMQFDQKHQTLSVVGTDTKRLSYTQLEKISIHSTEEDISCILPKRALLEILKLFYENFSFKSDGMLAVIENEMHTFFTKLIDGNYPDYQKILPKEYISSFTLGKEEFKESIKLCSSLSSTIKLTLEKNNALFESLDSEHSETAKTSVEIEKGLDIEKAFHLGVNAKFFLEALNALGTTQFVLRCNEPSSPFLIQESLDEKQSHLNAKISTLMMPITL.

It belongs to the beta sliding clamp family. In terms of assembly, forms a ring-shaped head-to-tail homodimer around DNA which binds and tethers DNA polymerases and other proteins to the DNA. The DNA replisome complex has a single clamp-loading complex (3 tau and 1 each of delta, delta', psi and chi subunits) which binds 3 Pol III cores (1 core on the leading strand and 2 on the lagging strand) each with a beta sliding clamp dimer. Additional proteins in the replisome are other copies of gamma, psi and chi, Ssb, DNA helicase and RNA primase.

Its subcellular location is the cytoplasm. Functionally, confers DNA tethering and processivity to DNA polymerases and other proteins. Acts as a clamp, forming a ring around DNA (a reaction catalyzed by the clamp-loading complex) which diffuses in an ATP-independent manner freely and bidirectionally along dsDNA. Initially characterized for its ability to contact the catalytic subunit of DNA polymerase III (Pol III), a complex, multichain enzyme responsible for most of the replicative synthesis in bacteria; Pol III exhibits 3'-5' exonuclease proofreading activity. The beta chain is required for initiation of replication as well as for processivity of DNA replication. The polypeptide is Beta sliding clamp (dnaN) (Helicobacter pylori (strain ATCC 700392 / 26695) (Campylobacter pylori)).